We begin with the raw amino-acid sequence, 320 residues long: GTP 3',8-cyclase (320 aa).

Positions 5–225 (QFGRKINYLR…IQLIKKDEKA (221 aa)) constitute a Radical SAM core domain. R14 provides a ligand contact to GTP. [4Fe-4S] cluster contacts are provided by C21 and C25. Y27 serves as a coordination point for S-adenosyl-L-methionine. C28 contributes to the [4Fe-4S] cluster binding site. R64 serves as a coordination point for GTP. G68 provides a ligand contact to S-adenosyl-L-methionine. T95 is a GTP binding site. Position 119 (S119) interacts with S-adenosyl-L-methionine. Position 155 (K155) interacts with GTP. M189 is a binding site for S-adenosyl-L-methionine. [4Fe-4S] cluster contacts are provided by C248 and C251. 253 to 255 (RIR) contacts GTP. Position 265 (C265) interacts with [4Fe-4S] cluster.

This sequence belongs to the radical SAM superfamily. MoaA family. Monomer and homodimer. It depends on [4Fe-4S] cluster as a cofactor.

It carries out the reaction GTP + AH2 + S-adenosyl-L-methionine = (8S)-3',8-cyclo-7,8-dihydroguanosine 5'-triphosphate + 5'-deoxyadenosine + L-methionine + A + H(+). The protein operates within cofactor biosynthesis; molybdopterin biosynthesis. Its function is as follows. Catalyzes the cyclization of GTP to (8S)-3',8-cyclo-7,8-dihydroguanosine 5'-triphosphate. The polypeptide is GTP 3',8-cyclase (Campylobacter jejuni (strain RM1221)).